The sequence spans 309 residues: Mitochondrial import receptor subunit TOM34 (309 aa).

Ser8 bears the Phosphoserine mark. TPR repeat units follow at residues 9–42, 51–84, and 85–118; these read VEQL…LQAR, SVLY…VPFS, and IKPL…DNSV. Residues 158 to 189 are disordered; that stretch reads WNSLPSDNHKETAKTKSKEATATKSRVPSAGD. Ser160 is subject to Phosphoserine. Residues 164-178 are compositionally biased toward basic and acidic residues; sequence DNHKETAKTKSKEAT. Ser186 carries the post-translational modification Phosphoserine. TPR repeat units lie at residues 193–226, 227–260, and 261–294; these read AKAL…SSLE, SATY…DGKN, and VKAF…EPRN. Residue Lys197 forms a Glycyl lysine isopeptide (Lys-Gly) (interchain with G-Cter in SUMO2) linkage.

This sequence belongs to the Tom34 family. As to quaternary structure, interacts with HSP90A, VCP, ATP6V1D, KIAA0665, AMPK, and DMAP1 through its TPR repeat. In terms of tissue distribution, isoform 1 is ubiquitously expressed while isoform 2 is expressed only in mature testicular germ cells. Isoform 1 is expressed in all testicular cells. Isoform 2 is highly expressed in early to late pachytene cells but expression is significantly decreased in round spermatid cells.

It is found in the cytoplasm. Its subcellular location is the mitochondrion outer membrane. In terms of biological role, plays a role in the import of cytosolically synthesized preproteins into mitochondria. Binds the mature portion of precursor proteins. Interacts with cellular components, and possesses weak ATPase activity. May be a chaperone-like protein that helps to keep newly synthesized precursors in an unfolded import compatible state. This Mus musculus (Mouse) protein is Mitochondrial import receptor subunit TOM34 (Tomm34).